A 151-amino-acid polypeptide reads, in one-letter code: MD-2-related lipid-recognition protein (151 aa).

The first 18 residues, 1–18 (MAALHWLLLAALLGCTLA), serve as a signal peptide directing secretion. 3 cysteine pairs are disulfide-bonded: C27–C141, C45–C51, and C95–C100. A glycan (N-linked (GlcNAc...) asparagine) is linked at N58.

Post-translationally, N-glycosylated. As to expression, hemolymph (at protein level). Constitutively expressed mainly in fat body and also in hemocytes and secreted into hemolymph. Not detected in midgut, epidermis, or Malpighian tubule of naive larvae.

The protein localises to the secreted. In terms of biological role, binds to lipopolysaccharide from a variety of Gram-negative bacteria and to lipid A. The sequence is that of MD-2-related lipid-recognition protein from Manduca sexta (Tobacco hawkmoth).